A 545-amino-acid polypeptide reads, in one-letter code: Adenine deaminase (545 aa).

It belongs to the metallo-dependent hydrolases superfamily. Adenine deaminase family. Requires Mn(2+) as cofactor.

It carries out the reaction adenine + H2O + H(+) = hypoxanthine + NH4(+). The polypeptide is Adenine deaminase (Salinibacter ruber (strain DSM 13855 / M31)).